A 434-amino-acid chain; its full sequence is Perilipin-3 (434 aa).

Residues 1–22 (MSADGAEADGSTQVTVEEPVQQ) are disordered. N-acetylserine is present on Ser2. Ser31 carries the post-translational modification Phosphoserine. Lys65 is subject to N6-acetyllysine. Ser91 carries the post-translational modification Phosphoserine. A Glycyl lysine isopeptide (Lys-Gly) (interchain with G-Cter in SUMO1) cross-link involves residue Lys122. Phosphoserine is present on residues Ser130 and Ser148. Thr170 bears the Phosphothreonine mark. A phosphoserine mark is found at Ser175 and Ser179. Thr216 is subject to Phosphothreonine. Ser217 and Ser241 each carry phosphoserine. Tyr251 bears the Phosphotyrosine mark. 2 coiled-coil regions span residues 252–277 (EHSL…QVLS) and 353–377 (TNVK…SSIH).

It belongs to the perilipin family. In terms of assembly, homooligomer. Interacts with M6PR (via the cytoplasmic domain). Interacts with IGF2R (via the cytoplasmic domain). May exist as a homodimer. Phosphorylation at Tyr-251 by isoform 1 of CHKA (CHKalpha2) promotes dissociation from lipid droplets: dissociation is followed by recruitment of autophagosome machinery to lipid droplets and subsequent lipid droplet lipolysis.

It is found in the lipid droplet. It localises to the endosome membrane. The protein localises to the cytoplasm. Functionally, structural component of lipid droplets, which is required for the formation and maintenance of lipid storage droplets. Required for the transport of mannose 6-phosphate receptors (MPR) from endosomes to the trans-Golgi network. This Homo sapiens (Human) protein is Perilipin-3 (PLIN3).